The following is a 719-amino-acid chain: MDATRAFVKDVKRVVVKVGTAVVTRSDGRLALGRLGSLCEQLKELNSDGYEVILVTSGAVSAGRQRLRFRKLVNSSFADLQKPQVELDGKACAAVGQNGLMALYDTLFSQLDLTAAQLLVTDNDFRDPSFRTQLTETVYQLLDLKVVPVLNENDAVSTRKAPYEDSSGIFWDNDSLAALLALELKADLLILLSDVDGLYNGPPSDPRSKLISTYVKEKHQGEITFGDKSRLGRGGMTAKVKAAVYAAYAGIPVIIASGKATDNIIKVIDGQCVGTLFHKDAHLWVQVKETGVRDMAVAARESSRRLQAVSSEERKKILLDIADALEANEEKILAENEADVAAAQYAGYDRSLVARLAMNPDKISSLAKSIRVLADMEEPIGRILKRTEIADGLILEKTSCPLGVLLIVFESRPDALVQIASLAIRSGNGLLLKGGKEAKRSNAILHKVITSAIPDKVGEKLIGLVTSRDEIPDLLKLDDVIDLVIPRGSNKLVSQIKESTRIPVLGHADGICHVYVDKSANMDMAKRIVLDAKTDYPAACNAMETLLVHKDLAENGGLNDLIVDLRTEGVTMFGGPRIDALQEFNIQATQTFNREYSSPACTVEIVDDVYAAIEHINHHGSAHTDCIIAEDHKVAETFLQLVDSAAVLHNASTRFCDGFRFGLGAEVGISTSRIHARGPVGVEGLLTTRWVLKGSGQVVHGDKGVVYTHKDLPLVAQNS.

The interval 1 to 293 (MDATRAFVKD…WVQVKETGVR (293 aa)) is glutamate 5-kinase. 3 residues coordinate substrate: Ser-57, Asp-154, and Asn-173. ATP is bound by residues 193–194 (SD) and 233–239 (RGGMTAK). Residues 294-719 (DMAVAARESS…KDLPLVAQNS (426 aa)) form a gamma-glutamyl phosphate reductase region.

This sequence in the N-terminal section; belongs to the glutamate 5-kinase family. It in the C-terminal section; belongs to the gamma-glutamyl phosphate reductase family. In terms of tissue distribution, expressed at high levels in leaves and is inducible in roots subjected to salt stress.

It catalyses the reaction L-glutamate + ATP = L-glutamyl 5-phosphate + ADP. The catalysed reaction is L-glutamate 5-semialdehyde + phosphate + NADP(+) = L-glutamyl 5-phosphate + NADPH + H(+). Its pathway is amino-acid biosynthesis; L-proline biosynthesis; L-glutamate 5-semialdehyde from L-glutamate: step 1/2. The protein operates within amino-acid biosynthesis; L-proline biosynthesis; L-glutamate 5-semialdehyde from L-glutamate: step 2/2. Feedback regulated by proline. Its function is as follows. P5CS plays a key role in proline biosynthesis, leading to osmoregulation in plants. This Mesembryanthemum crystallinum (Common ice plant) protein is Delta-1-pyrroline-5-carboxylate synthase (P5CS).